The following is a 155-amino-acid chain: Protein-export protein SecB (155 aa).

The protein belongs to the SecB family. As to quaternary structure, homotetramer, a dimer of dimers. One homotetramer interacts with 1 SecA dimer.

The protein resides in the cytoplasm. One of the proteins required for the normal export of preproteins out of the cell cytoplasm. It is a molecular chaperone that binds to a subset of precursor proteins, maintaining them in a translocation-competent state. It also specifically binds to its receptor SecA. The protein is Protein-export protein SecB of Escherichia fergusonii (strain ATCC 35469 / DSM 13698 / CCUG 18766 / IAM 14443 / JCM 21226 / LMG 7866 / NBRC 102419 / NCTC 12128 / CDC 0568-73).